The chain runs to 52 residues: MLAKAMSLLMMFLLVLVIGSVMVSADDAPACPVGTKYDDVLKSCRSLLELQG.

The first 25 residues, 1–25 (MLAKAMSLLMMFLLVLVIGSVMVSA), serve as a signal peptide directing secretion.

The protein belongs to the scutigerotoxin-01 family. Contains 1 disulfide bond. In terms of tissue distribution, expressed by the venom gland.

The protein resides in the secreted. The polypeptide is U-scutigerotoxin(01)-Tl1a (Thereuopoda longicornis (Long-legged centipede)).